The chain runs to 597 residues: Elongation factor 4 (597 aa).

A tr-type G domain is found at 2–184 (DHIRNFSIIA…ALIAKVPPPK (183 aa)). Residues 14 to 19 (DHGKST) and 131 to 134 (NKID) contribute to the GTP site.

The protein belongs to the TRAFAC class translation factor GTPase superfamily. Classic translation factor GTPase family. LepA subfamily.

It localises to the cell inner membrane. It catalyses the reaction GTP + H2O = GDP + phosphate + H(+). Its function is as follows. Required for accurate and efficient protein synthesis under certain stress conditions. May act as a fidelity factor of the translation reaction, by catalyzing a one-codon backward translocation of tRNAs on improperly translocated ribosomes. Back-translocation proceeds from a post-translocation (POST) complex to a pre-translocation (PRE) complex, thus giving elongation factor G a second chance to translocate the tRNAs correctly. Binds to ribosomes in a GTP-dependent manner. The sequence is that of Elongation factor 4 from Cupriavidus pinatubonensis (strain JMP 134 / LMG 1197) (Cupriavidus necator (strain JMP 134)).